A 386-amino-acid polypeptide reads, in one-letter code: Succinate--CoA ligase [ADP-forming] subunit beta (386 aa).

The ATP-grasp domain maps to 9–244 (KELLRDYGVP…LNEEDEKEIE (236 aa)). Residues Lys-46, 53–55 (GRG), Glu-99, Cys-102, and Glu-107 contribute to the ATP site. The Mg(2+) site is built by Asn-199 and Asp-213. Residues Asn-264 and 321 to 323 (GIM) each bind substrate.

This sequence belongs to the succinate/malate CoA ligase beta subunit family. As to quaternary structure, heterotetramer of two alpha and two beta subunits. The cofactor is Mg(2+).

The enzyme catalyses succinate + ATP + CoA = succinyl-CoA + ADP + phosphate. It carries out the reaction GTP + succinate + CoA = succinyl-CoA + GDP + phosphate. It functions in the pathway carbohydrate metabolism; tricarboxylic acid cycle; succinate from succinyl-CoA (ligase route): step 1/1. In terms of biological role, succinyl-CoA synthetase functions in the citric acid cycle (TCA), coupling the hydrolysis of succinyl-CoA to the synthesis of either ATP or GTP and thus represents the only step of substrate-level phosphorylation in the TCA. The beta subunit provides nucleotide specificity of the enzyme and binds the substrate succinate, while the binding sites for coenzyme A and phosphate are found in the alpha subunit. This chain is Succinate--CoA ligase [ADP-forming] subunit beta, found in Alkaliphilus oremlandii (strain OhILAs) (Clostridium oremlandii (strain OhILAs)).